The primary structure comprises 66 residues: Sarcoplasmic/endoplasmic reticulum calcium ATPase regulator ARLN (66 aa).

Position 1 is an N-acetylmethionine (Met1). A disordered region spans residues 1–37; it reads MEVDAPGVDGRDGLRERRGFSEGGRQNFDVRPQSGAN. Basic and acidic residues predominate over residues 9 to 20; it reads DGRDGLRERRGF. Residues 45-65 form a helical membrane-spanning segment; it reads WLDLWLFILFDVVVFLFVYFL.

As to quaternary structure, homooligomer. Can also form heterooligomers with other sarcoplasmic/endoplasmic reticulum calcium ATPase (SERCA) regulators ERLN, PLN, SLN and STRIT1/DWORF. Monomer. Interacts as a monomer with ATP2A2/SERCA2; the interaction results in inhibition of ATP2A2 Ca(2+) affinity.

It localises to the endoplasmic reticulum membrane. In terms of biological role, inhibits the activity of the calcium ATPases ATP2A2/SERCA2 and ATP2A3/SERCA3 by decreasing their apparent affinity for Ca(2+). This chain is Sarcoplasmic/endoplasmic reticulum calcium ATPase regulator ARLN, found in Homo sapiens (Human).